The primary structure comprises 289 residues: Pantothenate synthetase (289 aa).

M28–H35 contributes to the ATP binding site. H35 acts as the Proton donor in catalysis. Q59 contributes to the (R)-pantoate binding site. Residue Q59 coordinates beta-alanine. ATP is bound at residue G147–D150. A (R)-pantoate-binding site is contributed by Q153. Residues V176 and M184 to R187 each bind ATP.

It belongs to the pantothenate synthetase family. Homodimer.

Its subcellular location is the cytoplasm. It catalyses the reaction (R)-pantoate + beta-alanine + ATP = (R)-pantothenate + AMP + diphosphate + H(+). Its pathway is cofactor biosynthesis; (R)-pantothenate biosynthesis; (R)-pantothenate from (R)-pantoate and beta-alanine: step 1/1. Functionally, catalyzes the condensation of pantoate with beta-alanine in an ATP-dependent reaction via a pantoyl-adenylate intermediate. This chain is Pantothenate synthetase, found in Magnetococcus marinus (strain ATCC BAA-1437 / JCM 17883 / MC-1).